The primary structure comprises 490 residues: Probable glycine dehydrogenase (decarboxylating) subunit 2 (490 aa).

An N6-(pyridoxal phosphate)lysine modification is found at lysine 273.

This sequence belongs to the GcvP family. C-terminal subunit subfamily. In terms of assembly, the glycine cleavage system is composed of four proteins: P, T, L and H. In this organism, the P 'protein' is a heterodimer of two subunits. It depends on pyridoxal 5'-phosphate as a cofactor.

It carries out the reaction N(6)-[(R)-lipoyl]-L-lysyl-[glycine-cleavage complex H protein] + glycine + H(+) = N(6)-[(R)-S(8)-aminomethyldihydrolipoyl]-L-lysyl-[glycine-cleavage complex H protein] + CO2. Functionally, the glycine cleavage system catalyzes the degradation of glycine. The P protein binds the alpha-amino group of glycine through its pyridoxal phosphate cofactor; CO(2) is released and the remaining methylamine moiety is then transferred to the lipoamide cofactor of the H protein. This chain is Probable glycine dehydrogenase (decarboxylating) subunit 2, found in Staphylococcus aureus (strain MRSA252).